The chain runs to 72 residues: MAVFKVFFQHNKDEVIVRENTNTIYVEGETEEQVRRYLKDRNYNIEFITKLEGAHLEYEKEHSDHFNVENAQ.

Belongs to the RNA polymerase subunit epsilon family. In terms of assembly, RNAP is composed of a core of 2 alpha, a beta and a beta' subunit. The core is associated with a delta subunit, and at least one of epsilon or omega. When a sigma factor is associated with the core the holoenzyme is formed, which can initiate transcription.

It carries out the reaction RNA(n) + a ribonucleoside 5'-triphosphate = RNA(n+1) + diphosphate. Functionally, a non-essential component of RNA polymerase (RNAP). The sequence is that of DNA-directed RNA polymerase subunit epsilon from Staphylococcus haemolyticus (strain JCSC1435).